A 127-amino-acid polypeptide reads, in one-letter code: Holo-[acyl-carrier-protein] synthase (127 aa).

2 residues coordinate Mg(2+): Asp-8 and Glu-57.

Belongs to the P-Pant transferase superfamily. AcpS family. Mg(2+) serves as cofactor.

The protein localises to the cytoplasm. The enzyme catalyses apo-[ACP] + CoA = holo-[ACP] + adenosine 3',5'-bisphosphate + H(+). Its function is as follows. Transfers the 4'-phosphopantetheine moiety from coenzyme A to a Ser of acyl-carrier-protein. The protein is Holo-[acyl-carrier-protein] synthase of Hydrogenovibrio crunogenus (strain DSM 25203 / XCL-2) (Thiomicrospira crunogena).